Reading from the N-terminus, the 24-residue chain is Humanin-like 12 (24 aa).

The protein belongs to the humanin family.

It localises to the secreted. The protein resides in the cytoplasm. Its function is as follows. Plays a role as a neuroprotective and antiapoptotic factor. The sequence is that of Humanin-like 12 from Homo sapiens (Human).